We begin with the raw amino-acid sequence, 352 residues long: DNA integrity scanning protein DisA (352 aa).

Positions 3–143 (PQELIEKIKL…NYKYVVNQVD (141 aa)) constitute a DAC domain. ATP contacts are provided by residues G71, L89, and 102 to 106 (TRHRT).

The protein belongs to the DisA family. Homooctamer. It depends on Mg(2+) as a cofactor.

The enzyme catalyses 2 ATP = 3',3'-c-di-AMP + 2 diphosphate. Participates in a DNA-damage check-point. DisA forms globular foci that rapidly scan along the chromosomes searching for lesions. Its function is as follows. Also has diadenylate cyclase activity, catalyzing the condensation of 2 ATP molecules into cyclic di-AMP (c-di-AMP). c-di-AMP likely acts as a signaling molecule that may couple DNA integrity with a cellular process. The polypeptide is DNA integrity scanning protein DisA (Thermotoga petrophila (strain ATCC BAA-488 / DSM 13995 / JCM 10881 / RKU-1)).